The sequence spans 855 residues: MATRYDPQSAEPRWRDAWEKADIFRTKAPKDAPGAPKAFVLEMFPYPSGRLHMGHVRNYAMGDVVARHKRAKGYNVLHPMGWDAFGMPAENAAMERKVHPGKWTYANIESMKAQFRKLGLSLDWSREFATCDPDYYGAQQALFLKLMDKGLVYRKASKVNWDPVDNTVLANEQVIDGRGWRSGAPVEQRELTQWFFKITAYADDLLEAVQKLERWPEKVRTMQANWIGRSEGLEMTFAFDGERPAGFEDGISVFTTRPDTLFGASFVALSPDHPLTLQLAEKSDALQAFRAKCAQIGTSEEAIEKAEKLGFDTGLTVAHPFEPGRTVPVWVANFVLMGYGTGAIFGCPAHDQRDLDFARKFGLDVFPVVLPPGADAAAFEVGIEAYTGPGHIYKSGFLDGLSIDDAKRAAIAKIEAAGQGEGKVNYRLRDWGVSRQRYWGCPIPVVHCEDCGVVGVPAADLPVRLPEDVTFDVPGNPLDRHPDWKHVDCPKCGKPARRETDTLDTFVDSSWYYARFASVSDPEERAYWLPVDQYIGGVEHAVLHLLYSRFFSRAMRDVGELDLPSGEPFAGLFTQGMVTHETYRSEGGTWLEPSAVERKDGQVFEIATGKPVKVGAIEKMSKSKKNTVDPDAIVATYGADVARWFVLSDSPPERDVEWTQSGAEGAARFVQRVWSFVDSLPETGPFPAPGSDDVSTALRKSNHKAVAAIDRAIEEFRFNSAIATIHEWVNALKKTESDPATLGARAEGADMLARCLVPFMPHLAEACWERLGQTSLVSQAMWPKIDASLVVDDTVTLAVQVNGKRRAEITVAKDMAPDAVEAAAKALPDVASFIAGKSVKKTIVVPGRIVNIVVA.

The 'HIGH' region signature appears at 45–55 (PYPSGRLHMGH). A 'KMSKS' region motif is present at residues 619 to 623 (KMSKS). K622 lines the ATP pocket.

This sequence belongs to the class-I aminoacyl-tRNA synthetase family.

The protein localises to the cytoplasm. The enzyme catalyses tRNA(Leu) + L-leucine + ATP = L-leucyl-tRNA(Leu) + AMP + diphosphate. This chain is Leucine--tRNA ligase, found in Hyphomonas neptunium (strain ATCC 15444).